Reading from the N-terminus, the 251-residue chain is Imidazole glycerol phosphate synthase subunit HisF (251 aa).

Active-site residues include Asp11 and Asp130.

This sequence belongs to the HisA/HisF family. In terms of assembly, heterodimer of HisH and HisF.

It localises to the cytoplasm. The catalysed reaction is 5-[(5-phospho-1-deoxy-D-ribulos-1-ylimino)methylamino]-1-(5-phospho-beta-D-ribosyl)imidazole-4-carboxamide + L-glutamine = D-erythro-1-(imidazol-4-yl)glycerol 3-phosphate + 5-amino-1-(5-phospho-beta-D-ribosyl)imidazole-4-carboxamide + L-glutamate + H(+). Its pathway is amino-acid biosynthesis; L-histidine biosynthesis; L-histidine from 5-phospho-alpha-D-ribose 1-diphosphate: step 5/9. Functionally, IGPS catalyzes the conversion of PRFAR and glutamine to IGP, AICAR and glutamate. The HisF subunit catalyzes the cyclization activity that produces IGP and AICAR from PRFAR using the ammonia provided by the HisH subunit. The sequence is that of Imidazole glycerol phosphate synthase subunit HisF from Streptococcus mutans serotype c (strain ATCC 700610 / UA159).